Reading from the N-terminus, the 245-residue chain is MNVTLLIPARYGSSRFPGKPLAPINGKPMIQHVYERASLAKGLTAIYVATDDDRIKEAVEAFGGKVVMTDPQAASGTDRIEDAITQLGLKDDDLIVNLQGDQPLIDPISIEQVITLFERHPGEFSMATLGVEITEKAELDDPKHVKMVFDNNFNALYFSRARIPFGRDTNDYPVYKHLGIYAYTRSFISTFAKLPLGRLEDLEKLEQLRALEHGHKIKVAISAFDSPEVDTPEDIRICEARLAVD.

The protein belongs to the KdsB family.

The protein resides in the cytoplasm. It catalyses the reaction 8-amino-3,8-dideoxy-alpha-D-manno-octulosonate + CTP = CMP-8-amino-3,8-dideoxy-alpha-D-manno-oct-2-ulosonate + diphosphate. It functions in the pathway bacterial outer membrane biogenesis; lipopolysaccharide biosynthesis. Its function is as follows. Activates KDO8N (a required 8-carbon sugar) for incorporation into bacterial lipopolysaccharide in the Shewanella genus. The sequence is that of 8-amino-3,8-dideoxy-manno-octulosonate cytidylyltransferase from Shewanella woodyi (strain ATCC 51908 / MS32).